Here is a 414-residue protein sequence, read N- to C-terminus: E3 ubiquitin-protein ligase makorin-2 (414 aa).

2 consecutive C3H1-type zinc fingers follow at residues Ser-2–Thr-29 and Ser-31–Pro-58. Residues Lys-57 to Leu-94 form a disordered region. Low complexity predominate over residues Ser-73–Pro-82. Residues Gln-164–Met-191 form a C3H1-type 3 zinc finger. A makorin-type Cys-His region spans residues Cys-192–Met-221. An RING-type zinc finger spans residues Cys-237–Arg-291. Residues Gly-320–Ala-349 form a C3H1-type 4 zinc finger.

The protein resides in the cytoplasm. It localises to the nucleus. The enzyme catalyses S-ubiquitinyl-[E2 ubiquitin-conjugating enzyme]-L-cysteine + [acceptor protein]-L-lysine = [E2 ubiquitin-conjugating enzyme]-L-cysteine + N(6)-ubiquitinyl-[acceptor protein]-L-lysine.. Its pathway is protein modification; protein ubiquitination. In terms of biological role, E3 ubiquitin ligase catalyzing the covalent attachment of ubiquitin moieties onto substrate proteins. Inhibits neurogenesis and axis formation during embryonic development by modulating the phosphatidylinositol 3-kinase (PI3K) pathway. Acts downstream of PI3K and akt1 to up-regulate gsk3b mRNA expression. This chain is E3 ubiquitin-protein ligase makorin-2 (mkrn2), found in Danio rerio (Zebrafish).